A 219-amino-acid chain; its full sequence is Protein GrpE (219 aa).

Disordered regions lie at residues 1–32 (MSTT…LDAT) and 59–87 (FDGV…AERT).

It belongs to the GrpE family. In terms of assembly, homodimer.

Its subcellular location is the cytoplasm. In terms of biological role, participates actively in the response to hyperosmotic and heat shock by preventing the aggregation of stress-denatured proteins, in association with DnaK and GrpE. It is the nucleotide exchange factor for DnaK and may function as a thermosensor. Unfolded proteins bind initially to DnaJ; upon interaction with the DnaJ-bound protein, DnaK hydrolyzes its bound ATP, resulting in the formation of a stable complex. GrpE releases ADP from DnaK; ATP binding to DnaK triggers the release of the substrate protein, thus completing the reaction cycle. Several rounds of ATP-dependent interactions between DnaJ, DnaK and GrpE are required for fully efficient folding. This is Protein GrpE from Corynebacterium diphtheriae (strain ATCC 700971 / NCTC 13129 / Biotype gravis).